A 235-amino-acid polypeptide reads, in one-letter code: Small ribosomal subunit protein uS3 (235 aa).

The KH type-2 domain occupies 39 to 107 (IREILHKELK…DVVINIVEIR (69 aa)). The disordered stretch occupies residues 215–235 (QDKRMAESDGGGSSRPRRDAA).

It belongs to the universal ribosomal protein uS3 family. In terms of assembly, part of the 30S ribosomal subunit. Forms a tight complex with proteins S10 and S14.

Binds the lower part of the 30S subunit head. Binds mRNA in the 70S ribosome, positioning it for translation. The chain is Small ribosomal subunit protein uS3 from Rhodopseudomonas palustris (strain TIE-1).